We begin with the raw amino-acid sequence, 1756 residues long: Multifunctional conjugation protein TraI (1756 aa).

A DNA relaxase region spans residues 1–330; that stretch reads MLSFSVVKSA…TQAIAGLSER (330 aa). Residue tyrosine 16 is the O-(5'-phospho-DNA)-tyrosine intermediate; for relaxase activity of the active site. Tyrosine 17 (relaxase) is an active-site residue. 3 residues coordinate Mg(2+): histidine 146, histidine 157, and histidine 159. Residues 950–1500 are DNA helicase I; that stretch reads GKEAVTPLME…LRDVAAGRAV (551 aa). 992-999 serves as a coordination point for ATP; it reads GYAGVGKT. Residues 1719 to 1753 adopt a coiled-coil conformation; it reads EQEAVREVARENLLQERLQQIERDMVRDLQKEKTL.

This sequence to TraI of plasmid F. In terms of assembly, monomer. Part of the relaxosome, a complex composed of plasmid-encodes TraI, TraM, TraY and host-encoded IHF bound to the F plasmid origin of transfer (oriT). Directly contacts coupling protein TraD. Seems to directly contact TraM via its C-terminus. The cofactor is Mg(2+).

The protein resides in the cytoplasm. The catalysed reaction is ATP-independent breakage of single-stranded DNA, followed by passage and rejoining.. The enzyme catalyses ATP + H2O = ADP + phosphate + H(+). Its function is as follows. Conjugative DNA transfer (CDT) is the unidirectional transfer of ssDNA plasmid from a donor to a recipient cell. It is the central mechanism by which antibiotic resistance and virulence factors are propagated in bacterial populations. Part of the relaxosome, which facilitates a site- and strand-specific cut in the origin of transfer by TraI, at the nic site. Relaxosome formation requires binding of IHF and TraY to the oriT region, which then facilitates binding of TraI relaxase. TraI forms a covalent 5'-phosphotyrosine intermediate linkage to the ssDNA. The transesterified T-strand moves from the donor cell to the recipient cell in a 5'to 3' direction, with the DNA helicase activity of TraI unwinding the DNA. DNA transfer occurs via the conjugative pore (transferosome) an intercellular junction mediated by a type IV secretion system, with TraD providing the means to link the relaxosome to the conjugative pore. The relaxase completes DNA transfer by reversing the covalent phosphotyrosine linkage and releasing the T-strand. Functionally, traI has also been identified as DNA helicase I. DNA. helicase I is a potent, highly processive DNA-dependent ATPase, able to unwind about 1.1 kb dsDNA per second in a 5' to 3' manner. This is Multifunctional conjugation protein TraI (traI) from Escherichia coli.